The following is a 322-amino-acid chain: Homoserine kinase (322 aa).

ATP is bound at residue 106–116 (ALSSGMGGSAA).

The protein belongs to the GHMP kinase family. Homoserine kinase subfamily.

It is found in the cytoplasm. The catalysed reaction is L-homoserine + ATP = O-phospho-L-homoserine + ADP + H(+). The protein operates within amino-acid biosynthesis; L-threonine biosynthesis; L-threonine from L-aspartate: step 4/5. In terms of biological role, catalyzes the ATP-dependent phosphorylation of L-homoserine to L-homoserine phosphate. The protein is Homoserine kinase of Xanthomonas campestris pv. campestris (strain B100).